The sequence spans 586 residues: Protein translocase subunit SecD (586 aa).

A run of 6 helical transmembrane segments spans residues 7-27 (LILI…TLKW), 418-438 (SALA…LSGV), 439-459 (VAGF…LSAF), 465-485 (LTSI…NIVI), 521-541 (TFIA…GFAW), and 546-566 (GIVA…EFII).

Belongs to the SecD/SecF family. SecD subfamily. As to quaternary structure, forms a complex with SecF. Part of the essential Sec protein translocation apparatus which comprises SecA, SecYEG and auxiliary proteins SecDF. Other proteins may also be involved.

Its subcellular location is the cell inner membrane. In terms of biological role, part of the Sec protein translocase complex. Interacts with the SecYEG preprotein conducting channel. SecDF uses the proton motive force (PMF) to complete protein translocation after the ATP-dependent function of SecA. This chain is Protein translocase subunit SecD, found in Borreliella burgdorferi (strain ATCC 35210 / DSM 4680 / CIP 102532 / B31) (Borrelia burgdorferi).